Consider the following 598-residue polypeptide: Fumarate reductase flavoprotein subunit (598 aa).

FAD-binding positions include 12–16 (GAGGA), 36–38 (ISK), 44–52 (SHTVAAEGG), 156–158 (HFV), and Asp-212. A Tele-8alpha-FAD histidine modification is found at His-45. Active-site residues include His-233 and Arg-249. Residues 356-357 (HY), Glu-380, and 391-397 (RLGSNSL) contribute to the FAD site. The segment at 577–598 (AKRVYGGEADAQEKSDKEQANG) is disordered. Residues 587 to 598 (AQEKSDKEQANG) show a composition bias toward basic and acidic residues.

This sequence belongs to the FAD-dependent oxidoreductase 2 family. FRD/SDH subfamily. Part of an enzyme complex containing four subunits: a flavoprotein (FrdA), an iron-sulfur protein (FrdB), and two hydrophobic anchor proteins (FrdC and FrdD). Interacts with SdhE. FAD is required as a cofactor.

It localises to the cell inner membrane. The catalysed reaction is a quinone + succinate = fumarate + a quinol. It catalyses the reaction a menaquinone + succinate = a menaquinol + fumarate. Its function is as follows. Two distinct, membrane-bound, FAD-containing enzymes are responsible for the catalysis of fumarate and succinate interconversion; the fumarate reductase is used in anaerobic growth, and the succinate dehydrogenase is used in aerobic growth. In Serratia sp. (strain ATCC 39006) (Prodigiosinella confusarubida), this protein is Fumarate reductase flavoprotein subunit.